We begin with the raw amino-acid sequence, 330 residues long: Phosphate acyltransferase (330 aa).

It belongs to the PlsX family. In terms of assembly, homodimer. Probably interacts with PlsY.

It localises to the cytoplasm. It catalyses the reaction a fatty acyl-[ACP] + phosphate = an acyl phosphate + holo-[ACP]. It participates in lipid metabolism; phospholipid metabolism. Catalyzes the reversible formation of acyl-phosphate (acyl-PO(4)) from acyl-[acyl-carrier-protein] (acyl-ACP). This enzyme utilizes acyl-ACP as fatty acyl donor, but not acyl-CoA. In Lactobacillus delbrueckii subsp. bulgaricus (strain ATCC BAA-365 / Lb-18), this protein is Phosphate acyltransferase.